The chain runs to 438 residues: MGETNSSLDNENTSFVGKLSSSSNVDPTLNLLFSQSKPIPKPVAKETTVLTKKDVEVEEANGVEEAAETIESDTKEVQNIKPKSKKKKKKLNDSSDDIEGKYFEELLAEEDEEKDKDSAGLINDEEDKSPAKQSVLEERTSQEDVKSEREVAEKLANELEKSDKTVFVNNLPARVVTNKGDYKDLTKHFRQFGAVDSIRFRSLAFSEAIPRKVAFFEKKFHSERDTVNAYIVFRDSSSARSALSLNGTMFMDRHLRVDSVSHPMPQDTKRCVFVGNLAFEAEEEPLWRYFGDCGSIDYVRIVRDPKTNLGKGFAYIQFKDTMGVDKALLLNEKKMPEGRTLRIMRAKSTKPKSITRSKRGDEKTRTLQGRARKLIGKAGNALLQQELALEGHRAKPGENPLAKKKVNKKRKERAAQWRNKKAESVGKKQKTAAGKKDK.

2 disordered regions span residues 1–28 and 60–94; these read MGET…VDPT and ANGV…LNDS. A compositionally biased stretch (acidic residues) spans 60–71; the sequence is ANGVEEAAETIE. Residues S94 and S95 each carry the phosphoserine modification. A disordered region spans residues 108-146; the sequence is AEEDEEKDKDSAGLINDEEDKSPAKQSVLEERTSQEDVK. Basic and acidic residues predominate over residues 135–146; the sequence is VLEERTSQEDVK. 2 RRM domains span residues 164–262 and 270–348; these read KTVF…SVSH and RCVF…RAKS. Basic residues-rich tracts occupy residues 346–357 and 402–412; these read AKSTKPKSITRS and AKKKVNKKRKE. 2 disordered regions span residues 346–366 and 390–438; these read AKST…KTRT and EGHR…KKDK.

This sequence belongs to the RRM RBM34 family.

It localises to the nucleus. It is found in the nucleolus. In terms of biological role, involved in pre-25S rRNA processing. The chain is Nucleolar protein 12 (nop12) from Schizosaccharomyces pombe (strain 972 / ATCC 24843) (Fission yeast).